Here is a 172-residue protein sequence, read N- to C-terminus: MPEELTPTPETAVVEAGPVSRWLSENGFENTALERDHLGVEIVQVDREVLLPIAAALFAYGFNYLQCQGGYDLGPGQDLVSFYHLTKVSDDASQPQEVRVKVFLPRHDPKVPPVFWIWKGADWQERETFDMYGIQFEGHPNLKRILMPEDWVGWPLRKDYISPDFYELQDAY.

It belongs to the complex I 30 kDa subunit family. In terms of assembly, NDH-1 can be composed of about 15 different subunits; different subcomplexes with different compositions have been identified which probably have different functions.

The protein localises to the cellular thylakoid membrane. It catalyses the reaction a plastoquinone + NADH + (n+1) H(+)(in) = a plastoquinol + NAD(+) + n H(+)(out). The catalysed reaction is a plastoquinone + NADPH + (n+1) H(+)(in) = a plastoquinol + NADP(+) + n H(+)(out). In terms of biological role, NDH-1 shuttles electrons from an unknown electron donor, via FMN and iron-sulfur (Fe-S) centers, to quinones in the respiratory and/or the photosynthetic chain. The immediate electron acceptor for the enzyme in this species is believed to be plastoquinone. Couples the redox reaction to proton translocation, and thus conserves the redox energy in a proton gradient. Cyanobacterial NDH-1 also plays a role in inorganic carbon-concentration. The protein is NAD(P)H-quinone oxidoreductase subunit J of Synechococcus sp. (strain ATCC 27144 / PCC 6301 / SAUG 1402/1) (Anacystis nidulans).